The primary structure comprises 170 residues: J domain-containing protein (170 aa).

In terms of domain architecture, J spans 17-82; it reads DYYALLGCDE…SKRALYDKWR (66 aa). Residues 101 to 170 are disordered; it reads QQSMHWSKPN…VLSKFRNYEI (70 aa). Residues 110-120 are compositionally biased toward basic and acidic residues; sequence NTKDRMLEGDG. Low complexity predominate over residues 121–134; that stretch reads SKPSGPSSLGPSNP.

The chain is J domain-containing protein (jdp) from Bombyx mori (Silk moth).